The sequence spans 114 residues: Small ribosomal subunit protein uS14m (114 aa).

The protein belongs to the universal ribosomal protein uS14 family.

It localises to the mitochondrion. The polypeptide is Small ribosomal subunit protein uS14m (MRP2) (Eremothecium gossypii (strain ATCC 10895 / CBS 109.51 / FGSC 9923 / NRRL Y-1056) (Yeast)).